The sequence spans 256 residues: Small ribosomal subunit protein uS2 (256 aa).

This sequence belongs to the universal ribosomal protein uS2 family.

The chain is Small ribosomal subunit protein uS2 from Geotalea uraniireducens (strain Rf4) (Geobacter uraniireducens).